The sequence spans 285 residues: Geranyl diphosphate 2-C-methyltransferase (285 aa).

The protein belongs to the geranyl diphosphate 2-C-methyltransferase family. Mg(2+) is required as a cofactor.

The enzyme catalyses (2E)-geranyl diphosphate + S-adenosyl-L-methionine = (E)-2-methylgeranyl diphosphate + S-adenosyl-L-homocysteine + H(+). Its function is as follows. Catalyzes the SAM-dependent methylation of geranyl diphosphate (GPP) to yield (E)-2-methylgeranyl diphosphate (2-MeGPP). The protein is Geranyl diphosphate 2-C-methyltransferase of Saccharopolyspora erythraea (strain ATCC 11635 / DSM 40517 / JCM 4748 / NBRC 13426 / NCIMB 8594 / NRRL 2338).